The primary structure comprises 526 residues: Tyrosine-protein kinase transforming protein Src (526 aa).

The disordered stretch occupies residues 1 to 57 (MGSSKSKPKDPSQRRRSLEPPDSTHHGGFPASQTPNKTAAPDTHRTPSRSFGTVATE). A lipid anchor (N-myristoyl glycine; by host) is attached at Gly-2. Positions 7–25 (KPKDPSQRRRSLEPPDSTH) are enriched in basic and acidic residues. In terms of domain architecture, SH3 spans 81–142 (GGVTTFVALY…PSNYVAPSDS (62 aa)). Residues 148–245 (WYFGKITRRE…GLCHRLTNVC (98 aa)) form the SH2 domain. Positions 267–517 (LRLEVKLGQG…TFEYLQAQLL (251 aa)) constitute a Protein kinase domain. Residues 273 to 281 (LGQGCFGEV) and Lys-295 contribute to the ATP site. Asp-386 acts as the Proton acceptor in catalysis. At Tyr-416 the chain carries Phosphotyrosine; by autocatalysis.

The protein belongs to the protein kinase superfamily. Tyr protein kinase family. SRC subfamily. Homodimer. The phosphorylated form is termed pp60v-src.

It catalyses the reaction L-tyrosyl-[protein] + ATP = O-phospho-L-tyrosyl-[protein] + ADP + H(+). Functionally, this phosphoprotein, required for both the initiation and the maintenance of neoplastic transformation, is a protein kinase that catalyzes the phosphorylation of tyrosine residues in vitro. Causes mitotic slippage in addition to cytokinesis failure in the host cell. Phosphorylates and attenuates the activity of host CDK1, possibly causing the mitotic slippage. This is Tyrosine-protein kinase transforming protein Src (V-SRC) from Rous sarcoma virus subgroup A (strain Schmidt-Ruppin) (RSV-SR-A).